A 208-amino-acid chain; its full sequence is 3-isopropylmalate dehydratase small subunit 2 (208 aa).

The protein belongs to the LeuD family. LeuD type 1 subfamily. Heterodimer of LeuC and LeuD.

The catalysed reaction is (2R,3S)-3-isopropylmalate = (2S)-2-isopropylmalate. It functions in the pathway amino-acid biosynthesis; L-leucine biosynthesis; L-leucine from 3-methyl-2-oxobutanoate: step 2/4. Catalyzes the isomerization between 2-isopropylmalate and 3-isopropylmalate, via the formation of 2-isopropylmaleate. This chain is 3-isopropylmalate dehydratase small subunit 2, found in Salmonella choleraesuis (strain SC-B67).